The sequence spans 143 residues: Large ribosomal subunit protein uL11 (143 aa).

Belongs to the universal ribosomal protein uL11 family. Part of the ribosomal stalk of the 50S ribosomal subunit. Interacts with L10 and the large rRNA to form the base of the stalk. L10 forms an elongated spine to which L12 dimers bind in a sequential fashion forming a multimeric L10(L12)X complex. Post-translationally, one or more lysine residues are methylated.

Forms part of the ribosomal stalk which helps the ribosome interact with GTP-bound translation factors. The chain is Large ribosomal subunit protein uL11 from Nitrosomonas europaea (strain ATCC 19718 / CIP 103999 / KCTC 2705 / NBRC 14298).